The chain runs to 239 residues: MIAFLVLPILAAVLQQSSGNVDFDSESPRKPEIQNEIIDLHNSLRRSVNPTASNMLKMEWYPEAAANAERWAFRCILSHSPRDSRVIGGIKCGENIYMSTSPMKWTAIIHEWHGEEKDFVYGQGASPANAVVGHYTQIVWYKSYRSGCAAAYCPSSEYKYFYVCQYCPAGNMQGKTATPYTSGPPCGDCPSACDNGLCTNPCTHEDKFTNCKDLVKQGCNNNYLKTNCPASCSCHNEII.

An N-terminal signal peptide occupies residues 1–19 (MIAFLVLPILAAVLQQSSG). Positions 39–166 (DLHNSLRRSV…EYKYFYVCQY (128 aa)) constitute an SCP domain. Intrachain disulfides connect Cys75–Cys153, Cys92–Cys167, Cys148–Cys164, Cys186–Cys193, Cys189–Cys198, Cys202–Cys234, Cys211–Cys228, and Cys219–Cys232. Residues 202 to 234 (CTHEDKFTNCKDLVKQGCNNNYLKTNCPASCSC) enclose the ShKT domain.

This sequence belongs to the CRISP family. Expressed by the venom gland.

It localises to the secreted. In terms of biological role, blocks contraction of smooth muscle elicited by high potassium-induced depolarization, but does not block caffeine-stimulated contraction. May target voltage-gated calcium channels in smooth muscle. The protein is Cysteine-rich venom protein of Vipera berus (Common European adder).